The following is a 499-amino-acid chain: Glycerol kinase (499 aa).

T12 contributes to the ADP binding site. ATP-binding residues include T12, T13, and S14. T12 contributes to the sn-glycerol 3-phosphate binding site. Position 16 (R16) interacts with ADP. Residues R82, E83, Y134, and D245 each contribute to the sn-glycerol 3-phosphate site. Glycerol-binding residues include R82, E83, Y134, D245, and Q246. Positions 267 and 311 each coordinate ADP. Positions 267, 311, 315, and 412 each coordinate ATP. ADP contacts are provided by G412 and N416.

This sequence belongs to the FGGY kinase family.

The enzyme catalyses glycerol + ATP = sn-glycerol 3-phosphate + ADP + H(+). The protein operates within polyol metabolism; glycerol degradation via glycerol kinase pathway; sn-glycerol 3-phosphate from glycerol: step 1/1. Its activity is regulated as follows. Inhibited by fructose 1,6-bisphosphate (FBP). In terms of biological role, key enzyme in the regulation of glycerol uptake and metabolism. Catalyzes the phosphorylation of glycerol to yield sn-glycerol 3-phosphate. The chain is Glycerol kinase from Brucella anthropi (strain ATCC 49188 / DSM 6882 / CCUG 24695 / JCM 21032 / LMG 3331 / NBRC 15819 / NCTC 12168 / Alc 37) (Ochrobactrum anthropi).